We begin with the raw amino-acid sequence, 133 residues long: Nickel-responsive regulator (133 aa).

4 residues coordinate Ni(2+): histidine 76, histidine 87, histidine 89, and cysteine 95.

The protein belongs to the transcriptional regulatory CopG/NikR family. Homotetramer. The cofactor is Ni(2+).

In terms of biological role, transcriptional repressor of the nikABCDE operon. Is active in the presence of excessive concentrations of intracellular nickel. This is Nickel-responsive regulator from Shigella dysenteriae serotype 1 (strain Sd197).